A 1424-amino-acid chain; its full sequence is ABC multidrug transporter H (1424 aa).

A disordered region spans residues 1–49 (MEDQGHLPSEPRALFDRRDDTDSTNTALDETDLSRTPLQDTSHTPHAED). The segment covering 23 to 42 (STNTALDETDLSRTPLQDTS) has biased composition (polar residues). N79 and N275 each carry an N-linked (GlcNAc...) asparagine glycan. The ABC transporter 1 domain occupies 96-351 (LSQFNIPQHI…MEEQGFVCRE (256 aa)). A run of 7 helical transmembrane segments spans residues 488–508 (GLFIKSGALFFSLLYNSLLAM), 520–540 (VLIKHKYFAFFHPAAFCIAQI), 544–564 (IPVLLFQISMFAVVVYFMVGL), 569–589 (GAFFSYWIIIFVATMVMTALF), 605–625 (VSGFLISALIMYCGYLEPYHA), 629–649 (WFIWIYWINPLAYAFDALLSI), and 710–730 (NFGILWAWWALFVAVTIIATS). The disordered stretch occupies residues 760–782 (EEAQLNEKAGHKGTGTDSEAQSN). 2 N-linked (GlcNAc...) asparagine glycosylation sites follow: N790 and N798. The 244-residue stretch at 794–1037 (FTWKNLTYTV…VKDYFARYGA (244 aa)) folds into the ABC transporter 2 domain. Position 830 to 837 (830 to 837 (GSSGAGKT)) interacts with ATP. The next 4 membrane-spanning stretches (helical) occupy residues 1131 to 1151 (IALHIGSALFNGFSFWMIGDS), 1161 to 1181 (TIFNFIFVAPGVINQLQPLFI), 1200 to 1220 (VAFVTALIVSEFPYLCVCAVL), and 1240 to 1260 (AIFFIMLCYEFLYTGIGQFIA). Residue N1265 is glycosylated (N-linked (GlcNAc...) asparagine). The next 2 helical transmembrane spans lie at 1268 to 1288 (FAALTNPLILGTLVSFCGVLV) and 1300 to 1320 (WIYWLNPFNYLMGSMLVFSVF). The N-linked (GlcNAc...) asparagine glycan is linked to N1338. A helical transmembrane segment spans residues 1395–1415 (TAIVCIFVLSSYALVYALMKL).

This sequence belongs to the ABC transporter superfamily. ABCG family. PDR (TC 3.A.1.205) subfamily.

It localises to the cell membrane. With respect to regulation, the efflux inhibitor FK506 impairs the transport activity. Its function is as follows. ABC efflux transporter that is able to transport rhodamine 6G (R-6G), a known substrate for many ABC transporters, but seems not to transport azoles. This is ABC multidrug transporter H from Aspergillus fumigatus (strain ATCC MYA-4609 / CBS 101355 / FGSC A1100 / Af293) (Neosartorya fumigata).